A 207-amino-acid chain; its full sequence is Putative 3-methyladenine DNA glycosylase (207 aa).

Belongs to the DNA glycosylase MPG family.

The polypeptide is Putative 3-methyladenine DNA glycosylase (Listeria monocytogenes serovar 1/2a (strain ATCC BAA-679 / EGD-e)).